The primary structure comprises 335 residues: Tetraacyldisaccharide 4'-kinase (335 aa).

58–65 (TMGGAGKT) serves as a coordination point for ATP.

It belongs to the LpxK family.

It catalyses the reaction a lipid A disaccharide + ATP = a lipid IVA + ADP + H(+). It participates in glycolipid biosynthesis; lipid IV(A) biosynthesis; lipid IV(A) from (3R)-3-hydroxytetradecanoyl-[acyl-carrier-protein] and UDP-N-acetyl-alpha-D-glucosamine: step 6/6. In terms of biological role, transfers the gamma-phosphate of ATP to the 4'-position of a tetraacyldisaccharide 1-phosphate intermediate (termed DS-1-P) to form tetraacyldisaccharide 1,4'-bis-phosphate (lipid IVA). This chain is Tetraacyldisaccharide 4'-kinase, found in Caulobacter vibrioides (strain ATCC 19089 / CIP 103742 / CB 15) (Caulobacter crescentus).